Here is a 156-residue protein sequence, read N- to C-terminus: 2-C-methyl-D-erythritol 2,4-cyclodiphosphate synthase (156 aa).

Residues aspartate 9 and histidine 11 each coordinate a divalent metal cation. 4-CDP-2-C-methyl-D-erythritol 2-phosphate is bound by residues 9 to 11 (DAH) and 36 to 37 (HS). Residue histidine 44 coordinates a divalent metal cation. 58-60 (NIG) provides a ligand contact to 4-CDP-2-C-methyl-D-erythritol 2-phosphate.

This sequence belongs to the IspF family. Homotrimer. Requires a divalent metal cation as cofactor.

It catalyses the reaction 4-CDP-2-C-methyl-D-erythritol 2-phosphate = 2-C-methyl-D-erythritol 2,4-cyclic diphosphate + CMP. It participates in isoprenoid biosynthesis; isopentenyl diphosphate biosynthesis via DXP pathway; isopentenyl diphosphate from 1-deoxy-D-xylulose 5-phosphate: step 4/6. Involved in the biosynthesis of isopentenyl diphosphate (IPP) and dimethylallyl diphosphate (DMAPP), two major building blocks of isoprenoid compounds. Catalyzes the conversion of 4-diphosphocytidyl-2-C-methyl-D-erythritol 2-phosphate (CDP-ME2P) to 2-C-methyl-D-erythritol 2,4-cyclodiphosphate (ME-CPP) with a corresponding release of cytidine 5-monophosphate (CMP). The chain is 2-C-methyl-D-erythritol 2,4-cyclodiphosphate synthase from Kosmotoga olearia (strain ATCC BAA-1733 / DSM 21960 / TBF 19.5.1).